The primary structure comprises 415 residues: uncharacterized protein (415 aa).

The next 10 membrane-spanning stretches (helical) occupy residues 20 to 40 (MAYLFYFITAFLLGTEAFGIL), 43 to 63 (LMPIADTLTIFFSSGIPPAIA), 78 to 98 (IPILYLMILLSVVGFILTPYI), 109 to 129 (LPNILYFAVGLCVVASTVIAF), 155 to 175 (VILVFILTLYLGIFGSLLSIS), 243 to 263 (IVIMSIMGGFWSGIYGYSSLI), 300 to 320 (IFSSIFVIGCLFFPEIPLIAF), 328 to 348 (GILCLRILAISSLFMSYYTLI), 360 to 380 (ISFYIILFGLVLNIILNLILV), and 388 to 408 (GSLATLITSISVFLIGVFAIL).

This sequence belongs to the polysaccharide synthase family.

Its subcellular location is the cell membrane. This is an uncharacterized protein from Methanocaldococcus jannaschii (strain ATCC 43067 / DSM 2661 / JAL-1 / JCM 10045 / NBRC 100440) (Methanococcus jannaschii).